We begin with the raw amino-acid sequence, 298 residues long: Protease HtpX homolog (298 aa).

2 consecutive transmembrane segments (helical) span residues 14–34 (VVLL…AGYL) and 39–59 (YAMG…SMIF). His-143 serves as a coordination point for Zn(2+). Glu-144 is an active-site residue. His-147 provides a ligand contact to Zn(2+). Transmembrane regions (helical) follow at residues 158–178 (IAVA…RMLW) and 197–217 (IITL…ASLI). Zn(2+) is bound at residue Glu-226.

Belongs to the peptidase M48B family. Zn(2+) serves as cofactor.

It is found in the cell membrane. This Streptococcus pyogenes serotype M6 (strain ATCC BAA-946 / MGAS10394) protein is Protease HtpX homolog.